The following is a 245-amino-acid chain: Tetraspanin-6 (245 aa).

At 1–19 (MASPSRRLQTKPVITCLKS) the chain is on the cytoplasmic side. The helical transmembrane segment at 20–40 (VLLIYTFIFWITGVILLAVGI) threads the bilayer. The Extracellular segment spans residues 41–59 (WGKVSLENYFSLLNEKATN). Residues 60-80 (VPFVLIGTGTVIILLGTFGCF) form a helical membrane-spanning segment. Over 81-93 (ATCRTSAWMLKLY) the chain is Cytoplasmic. Residues 94-114 (AMFLTLIFLVELVAAIVGFVF) form a helical membrane-spanning segment. The Extracellular portion of the chain corresponds to 115–208 (RHEIKNSFKS…IKVMTTIESE (94 aa)). The N-linked (GlcNAc...) asparagine glycan is linked to Asn-134. A helical transmembrane segment spans residues 209–229 (MGVVAGISFGVACFQLIGIFL). Topologically, residues 230–245 (AYCLSRAITNNQYEIV) are cytoplasmic.

The protein belongs to the tetraspanin (TM4SF) family.

The protein resides in the membrane. The polypeptide is Tetraspanin-6 (Tspan6) (Mus musculus (Mouse)).